A 1562-amino-acid polypeptide reads, in one-letter code: E3 ubiquitin-protein ligase listerin (1562 aa).

HEAT repeat units follow at residues Ser41–Gln78, Lys127–Ala164, Glu175–Leu217, Glu262–Lys301, Leu304–Thr348, Ser495–Ser532, Ser555–Ser592, Ile813–Cys850, Tyr908–Arg945, Phe997–Ser1037, Thr1047–Ser1085, Ile1188–Asp1226, Asn1263–Gly1298, and Leu1299–Pro1339. Residues Cys1508–Arg1555 form an RING-type zinc finger.

It belongs to the LTN1 family. As to quaternary structure, component of the ribosome quality control complex (RQC), composed of the E3 ubiquitin ligase RKR1/LTN1, RQC1 and RQC2, as well as CDC48 and its ubiquitin-binding cofactors associated with the 60S ribosomal subunits.

It is found in the nucleus. The protein localises to the cytoplasm. The protein resides in the cytosol. It carries out the reaction S-ubiquitinyl-[E2 ubiquitin-conjugating enzyme]-L-cysteine + [acceptor protein]-L-lysine = [E2 ubiquitin-conjugating enzyme]-L-cysteine + N(6)-ubiquitinyl-[acceptor protein]-L-lysine.. It participates in protein modification; protein ubiquitination. E3 ubiquitin-protein ligase component of the ribosome quality control complex (RQC), a ribosome-associated complex that mediates ubiquitination and extraction of incompletely synthesized nascent chains for proteasomal degradation. Mediates ubiquitination of proteins derived from mRNAs lacking stop codons (non-stop proteins) and other translation arrest products induced by poly-lysine sequences and tandem rare codons. Ubiquitination leads to CDC48 recruitment for extraction and degradation of the incomplete translation product. May indirectly play a role in chromatin function and transcription. This chain is E3 ubiquitin-protein ligase listerin, found in Saccharomyces cerevisiae (strain ATCC 204508 / S288c) (Baker's yeast).